Here is a 1182-residue protein sequence, read N- to C-terminus: Receptor-type guanylate cyclase gcy-19 (1182 aa).

A signal peptide spans 1–24; sequence MEYLLFLLLFAGFLTFLPRFLIYA. The Extracellular segment spans residues 25–507; it reads QITSSTTTTT…PQSFVDQYGA (483 aa). Asn-91, Asn-369, Asn-430, and Asn-453 each carry an N-linked (GlcNAc...) asparagine glycan. Residues 508–528 form a helical membrane-spanning segment; the sequence is LVFAIGGVLIFAMLFVITCFF. Over 529–1182 the chain is Cytoplasmic; the sequence is YVMRQKRLER…FRRQETLALI (654 aa). The Protein kinase domain maps to 562–849; the sequence is RMSKRSLQSG…KGNLMDHVFN (288 aa). The region spanning 907 to 1037 is the Guanylate cyclase domain; that stretch reads TVFFSDVVKF…DTVNTASRME (131 aa). The disordered stretch occupies residues 1094–1164; sequence VSSNSGYQSD…EAKARDIHNE (71 aa). The span at 1142-1152 shows a compositional bias: low complexity; that stretch reads SPTLSKRSVSP.

This sequence belongs to the adenylyl cyclase class-4/guanylyl cyclase family. Expressed in IL2 sensory neurons.

It is found in the cell membrane. It carries out the reaction GTP = 3',5'-cyclic GMP + diphosphate. Guanylate cyclase involved in the production of the second messenger cGMP. The protein is Receptor-type guanylate cyclase gcy-19 of Caenorhabditis elegans.